We begin with the raw amino-acid sequence, 420 residues long: MDNFINGYIPRNSFVHKLHPTTKLVIFLLLVILVFVPIGFVFQSVIFLFVTFVFFIAKLPGRFYSSAIKSITLLFLLLLFVNWFTFRDPGFYLTSDQLNSLPAIDNSKFSFWNISLFNYQDNVFSQVFAFNRGNLTNLNQLDFFYKANNADSYTKVKGIDSLASMLANNGNGLSKDKILSAFLDHNLNLYLARSWGANFAGFVVDFNPTTQLFKLTPFLANASYVLTLRAVILAFYVTQKILIMILFATVLTSTSSSVELAYGIERLLWPLKLIKIPVNVFAMTIAIAIRFVPSLLLESQRILNAQASRGLDFRNGGFLVKMRSLSSLVVPMVSIAFRNASELASAMEARGYHPAKKRSSYRQYKITWIDILALFLVFAWFVVIIFLTIRGAVFLDLGTPEWLLTGKINEQVIRDLKVSG.

6 consecutive transmembrane segments (helical) span residues 26-46, 66-86, 231-251, 276-296, 317-337, and 369-389; these read IFLL…QSVI, SAIK…WFTF, VILA…ATVL, IPVN…PSLL, GFLV…SIAF, and IDIL…FLTI.

Belongs to the CbiQ family.

The protein resides in the cell membrane. This is an uncharacterized protein from Mycoplasma genitalium (strain ATCC 33530 / DSM 19775 / NCTC 10195 / G37) (Mycoplasmoides genitalium).